Consider the following 128-residue polypeptide: Azurin (128 aa).

One can recognise a Plastocyanin-like domain in the interval 1–128 (ACDVSIEGND…IMKGTIELGS (128 aa)). C2 and C25 form a disulfide bridge. Residues H45, C111, H116, and M120 each contribute to the Cu cation site.

In terms of assembly, monomer. Interacts with the AAUA/AAUB heterotetramer complex. Cu cation serves as cofactor.

Its subcellular location is the periplasm. Its function is as follows. Transfers electrons from cytochrome c551 to cytochrome oxidase. Transfers electrons from the tryptophan tryptophylquinone of the aromatic amine dehydrogenase heterotetramer. This is Azurin from Alcaligenes faecalis.